The following is a 503-amino-acid chain: Lysine--tRNA ligase (503 aa).

The Mg(2+) site is built by glutamate 410 and glutamate 417.

The protein belongs to the class-II aminoacyl-tRNA synthetase family. As to quaternary structure, homodimer. Mg(2+) serves as cofactor.

It localises to the cytoplasm. The catalysed reaction is tRNA(Lys) + L-lysine + ATP = L-lysyl-tRNA(Lys) + AMP + diphosphate. This chain is Lysine--tRNA ligase, found in Prochlorococcus marinus (strain MIT 9211).